Here is a 372-residue protein sequence, read N- to C-terminus: Cyclic GMP-AMP synthase-like receptor (372 aa).

T68 contacts GTP. Residues S70 and 82–84 (EFD) contribute to the ATP site. Mg(2+) is bound by residues E82, D84, and D190. GTP contacts are provided by residues D190 and 236 to 243 (LVCAPYWE). ATP contacts are provided by residues 240 to 243 (PYWE), K261, and 274 to 278 (SYTIK).

Belongs to the mab-21 family. Requires Mg(2+) as cofactor. It depends on Mn(2+) as a cofactor.

The enzyme catalyses GTP + ATP = 3',2'-cGAMP + 2 diphosphate. It catalyses the reaction GTP + ATP = pppA(2'-5')pG + diphosphate. The catalysed reaction is pppA(2'-5')pG = 3',2'-cGAMP + diphosphate. With respect to regulation, the enzyme activity is specifically activated by double-stranded RNA (dsRNA). In terms of biological role, nucleotidyltransferase that catalyzes the formation of cyclic GMP-AMP (3',2'-cGAMP) from ATP and GTP and plays a key role in innate immunity. Synthesizes 3',2'-cGAMP in a two-step reaction through production of the linear intermediate pppA(2'-5')pG. Acts as a key sensor of double-stranded RNA (dsRNA), the presence of dsRNA in the cytoplasm being a danger signal that triggers the immune responses. Directly binds dsRNA longer than 15 bp, activating the nucleotidyltransferase activity, leading to synthesis of 3',2'-cGAMP, a second messenger that binds to and activates Sting, thereby triggering the antiviral immune response via activation of the NF-kappa-B transcription factor Rel (Relish). This is Cyclic GMP-AMP synthase-like receptor from Drosophila eugracilis (Fruit fly).